The following is a 109-amino-acid chain: Glutaredoxin-8 (109 aa).

A Glutaredoxin domain is found at 5–109; sequence VTKAEEMIKS…EELTKIGLLP (105 aa). Residues cysteine 25 and cysteine 28 are joined by a disulfide bond.

It belongs to the glutaredoxin family. In terms of assembly, monomer.

The protein resides in the cytoplasm. In terms of biological role, glutathione-dependent oxidoreductase with lower activity compared to the other members of the glutaredoxin family. The disulfide bond functions as an electron carrier in the glutathione-dependent synthesis of deoxyribonucleotides by the enzyme ribonucleotide reductase. The polypeptide is Glutaredoxin-8 (GRX8) (Saccharomyces cerevisiae (strain ATCC 204508 / S288c) (Baker's yeast)).